The primary structure comprises 155 residues: Ribosomal RNA large subunit methyltransferase H (155 aa).

S-adenosyl-L-methionine is bound by residues Leu-72, Gly-103, and 122-127 (LSDLTL).

Belongs to the RNA methyltransferase RlmH family. In terms of assembly, homodimer.

Its subcellular location is the cytoplasm. The enzyme catalyses pseudouridine(1915) in 23S rRNA + S-adenosyl-L-methionine = N(3)-methylpseudouridine(1915) in 23S rRNA + S-adenosyl-L-homocysteine + H(+). Its function is as follows. Specifically methylates the pseudouridine at position 1915 (m3Psi1915) in 23S rRNA. In Polaromonas naphthalenivorans (strain CJ2), this protein is Ribosomal RNA large subunit methyltransferase H.